The primary structure comprises 289 residues: Bis(5'-nucleosyl)-tetraphosphatase, symmetrical (289 aa).

It belongs to the Ap4A hydrolase family.

The enzyme catalyses P(1),P(4)-bis(5'-adenosyl) tetraphosphate + H2O = 2 ADP + 2 H(+). Functionally, hydrolyzes diadenosine 5',5'''-P1,P4-tetraphosphate to yield ADP. This chain is Bis(5'-nucleosyl)-tetraphosphatase, symmetrical, found in Yersinia pestis bv. Antiqua (strain Antiqua).